A 651-amino-acid chain; its full sequence is Acetyl-coenzyme A synthetase (651 aa).

CoA-binding positions include 189–192, Thr-311, and Asn-335; that span reads RGGK. ATP-binding positions include 387 to 389, 411 to 416, Asp-500, and Arg-515; these read GEP and DTWWQT. Residue Ser-523 participates in CoA binding. Arg-526 contributes to the ATP binding site. Mg(2+) contacts are provided by Val-537, His-539, and Val-542. Arg-584 contacts CoA. Lys-609 carries the N6-acetyllysine modification.

It belongs to the ATP-dependent AMP-binding enzyme family. Requires Mg(2+) as cofactor. Acetylated. Deacetylation by the SIR2-homolog deacetylase activates the enzyme.

It carries out the reaction acetate + ATP + CoA = acetyl-CoA + AMP + diphosphate. Its function is as follows. Catalyzes the conversion of acetate into acetyl-CoA (AcCoA), an essential intermediate at the junction of anabolic and catabolic pathways. AcsA undergoes a two-step reaction. In the first half reaction, AcsA combines acetate with ATP to form acetyl-adenylate (AcAMP) intermediate. In the second half reaction, it can then transfer the acetyl group from AcAMP to the sulfhydryl group of CoA, forming the product AcCoA. The chain is Acetyl-coenzyme A synthetase from Rhizobium leguminosarum bv. trifolii (strain WSM2304).